Consider the following 466-residue polypeptide: 3-isopropylmalate dehydratase large subunit (466 aa).

[4Fe-4S] cluster-binding residues include cysteine 347, cysteine 407, and cysteine 410.

The protein belongs to the aconitase/IPM isomerase family. LeuC type 1 subfamily. In terms of assembly, heterodimer of LeuC and LeuD. The cofactor is [4Fe-4S] cluster.

It catalyses the reaction (2R,3S)-3-isopropylmalate = (2S)-2-isopropylmalate. It participates in amino-acid biosynthesis; L-leucine biosynthesis; L-leucine from 3-methyl-2-oxobutanoate: step 2/4. Functionally, catalyzes the isomerization between 2-isopropylmalate and 3-isopropylmalate, via the formation of 2-isopropylmaleate. The protein is 3-isopropylmalate dehydratase large subunit of Escherichia fergusonii (strain ATCC 35469 / DSM 13698 / CCUG 18766 / IAM 14443 / JCM 21226 / LMG 7866 / NBRC 102419 / NCTC 12128 / CDC 0568-73).